A 322-amino-acid polypeptide reads, in one-letter code: Probable ethanolamine-phosphate cytidylyltransferase (322 aa).

Belongs to the cytidylyltransferase family.

The catalysed reaction is phosphoethanolamine + CTP + H(+) = CDP-ethanolamine + diphosphate. It participates in phospholipid metabolism; phosphatidylethanolamine biosynthesis; phosphatidylethanolamine from ethanolamine: step 2/3. This Encephalitozoon cuniculi (strain GB-M1) (Microsporidian parasite) protein is Probable ethanolamine-phosphate cytidylyltransferase (MUQ1).